We begin with the raw amino-acid sequence, 513 residues long: Maturase K (513 aa).

The protein belongs to the intron maturase 2 family. MatK subfamily.

Its subcellular location is the plastid. The protein localises to the chloroplast. Its function is as follows. Usually encoded in the trnK tRNA gene intron. Probably assists in splicing its own and other chloroplast group II introns. The protein is Maturase K of Cyrilla racemiflora (Swamp titi).